The chain runs to 523 residues: MASTAVMMDVDSSGVNDLHHSEKKYAEEDQVQELLKVLNEISKTTLTLDPRYIWRSLKDLSSLRNQELLNAETLCFTVNVLYPDSSSFKKNLLKFITSNHKSSVPGSAELRNSYPASFYSVNTEKKTIEVTAEINCFMHLLVQLFLWDSKELEQLVEFNRKVVIPNLLCYYNLRSLNLINAKLWFYIYLSHETLARSSEEINSDNQNIILRSTMMKFLKIASLKHDNETKAMLINLILRDFLNNGEVDSASDFISKLEYPHTDVSSSLEARYFFYLSKINAIQLDYSTANEYIIAAIRKAPHNSKSLGFLQQSNKLHCCIQLLMGDIPELSFFHQSNMQKSLLPYYHLTKAVKLGDLKKFTSTITKYKQLLLKDDTYQLCVRLRSNVIKTGIRIISLTYKKISLRDICLKLNLDSEQTVEYMVSRAIRDGVIEAKINHEDGFIETTELLNIYDSEDPQQVFDERIKFANQLHDEYLVSMRYPEDKKTQQNEKSENGENDDDTLDGDLMDDMSDISDLDDLGFL.

The residue at position 2 (Ala-2) is an N-acetylalanine. One can recognise a PCI domain in the interval 270–450 (ARYFFYLSKI…GFIETTELLN (181 aa)). The residue at position 454 (Ser-454) is a Phosphoserine. Basic and acidic residues predominate over residues 480 to 495 (RYPEDKKTQQNEKSEN). Residues 480 to 523 (RYPEDKKTQQNEKSENGENDDDTLDGDLMDDMSDISDLDDLGFL) form a disordered region. A compositionally biased stretch (acidic residues) spans 496–523 (GENDDDTLDGDLMDDMSDISDLDDLGFL).

This sequence belongs to the proteasome subunit S3 family. The 26S proteasome is composed of a core protease, known as the 20S proteasome, capped at one or both ends by the 19S regulatory complex (RC). The RC is composed of at least 18 different subunits in two subcomplexes, the base and the lid, which form the portions proximal and distal to the 20S proteolytic core, respectively. Post-translationally, N-acetylated by NAT1.

In terms of biological role, acts as a regulatory subunit of the 26S proteasome which is involved in the ATP-dependent degradation of ubiquitinated proteins. The protein is 26S proteasome regulatory subunit RPN3 (RPN3) of Saccharomyces cerevisiae (strain ATCC 204508 / S288c) (Baker's yeast).